The primary structure comprises 434 residues: Trigger factor (434 aa).

The region spanning G160–P245 is the PPIase FKBP-type domain.

This sequence belongs to the FKBP-type PPIase family. Tig subfamily.

It is found in the cytoplasm. It catalyses the reaction [protein]-peptidylproline (omega=180) = [protein]-peptidylproline (omega=0). Its function is as follows. Involved in protein export. Acts as a chaperone by maintaining the newly synthesized protein in an open conformation. Functions as a peptidyl-prolyl cis-trans isomerase. This is Trigger factor from Shewanella halifaxensis (strain HAW-EB4).